A 1048-amino-acid polypeptide reads, in one-letter code: Anguibactin system regulator (1048 aa).

In terms of domain architecture, Carrier spans 965 to 1039 (PIITASEDRV…AFAIIMDRCR (75 aa)).

The protein belongs to the ATP-dependent AMP-binding enzyme family.

It participates in siderophore biosynthesis; anguibactin biosynthesis. Bifunctional protein that plays an essential role in virulence. Plays a role in both the production of the siderophore anguibactin and the regulation of iron transport genes. This chain is Anguibactin system regulator (angR), found in Vibrio anguillarum (Listonella anguillarum).